Here is a 344-residue protein sequence, read N- to C-terminus: KRR1 small subunit processome component homolog (344 aa).

The KH domain occupies 125–193 (DIIKIGNLVH…VRDIVLETMN (69 aa)). The segment covering 232–245 (NISKRKQPKVKKQK) has biased composition (basic residues). Disordered stretches follow at residues 232-260 (NISK…ESKV) and 273-326 (QEQK…TKVD). Residues 270 to 295 (FLNQEQKQAKRNQGRTEKQKEAAKRQ) adopt a coiled-coil conformation. Basic and acidic residues-rich tracts occupy residues 283–302 (GRTE…RNKD) and 315–326 (RKKEDGSSTKVD).

It belongs to the KRR1 family. As to quaternary structure, monomer. Component of the ribosomal small subunit (SSU) processome.

The protein localises to the nucleus. It is found in the nucleolus. Functionally, required for 40S ribosome biogenesis. Involved in nucleolar processing of pre-18S ribosomal RNA and ribosome assembly. Binds to RNA. Required for female germline development, cell viability during eye development and for survival of dividing cells and epithelial cells during early wing disk development. This chain is KRR1 small subunit processome component homolog, found in Drosophila yakuba (Fruit fly).